Here is a 220-residue protein sequence, read N- to C-terminus: Cytidylate kinase (220 aa).

9–17 serves as a coordination point for ATP; that stretch reads GPAASGKST.

This sequence belongs to the cytidylate kinase family. Type 1 subfamily.

Its subcellular location is the cytoplasm. It carries out the reaction CMP + ATP = CDP + ADP. It catalyses the reaction dCMP + ATP = dCDP + ADP. The polypeptide is Cytidylate kinase (Thermotoga petrophila (strain ATCC BAA-488 / DSM 13995 / JCM 10881 / RKU-1)).